Consider the following 1067-residue polypeptide: [F-actin]-monooxygenase MICAL1 (1067 aa).

Positions 1–489 (MASPTSTNPA…RDLYDVLAKE (489 aa)) are monooxygenase domain. FAD contacts are provided by residues Cys-95, 114-116 (EKR), 121-123 (RHN), Phe-181, Tyr-293, and Asp-393. Phosphothreonine is present on Thr-475. The Calponin-homology (CH) domain occupies 508–612 (AGTQEELLRW…YLSHFHSAFK (105 aa)). Ser-617 is modified (phosphoserine). Residues 645-688 (SRAKENAEDAGGKKLRLEMEAETPSTEVPPDPEPGVPLTPPSQH) form a disordered region. Over residues 646–663 (RAKENAEDAGGKKLRLEM) the composition is skewed to basic and acidic residues. Positions 646–666 (RAKENAEDAGGKKLRLEMEAE) form a coiled coil. A compositionally biased stretch (pro residues) spans 671–684 (EVPPDPEPGVPLTP). Positions 695–757 (DLCALCGEHL…LQHLPQTDHK (63 aa)) constitute an LIM zinc-binding domain. The Zn(2+) site is built by Cys-697, Cys-700, His-718, Cys-721, Cys-724, Cys-727, Cys-747, and His-750. A compositionally biased stretch (basic and acidic residues) spans 755–766 (DHKAEGSDRGPE). 2 disordered regions span residues 755 to 838 (DHKA…RSCS) and 867 to 886 (KEEK…VPLD). Residues 773–789 (PSENSMPPGLSTPTASQ) are compositionally biased toward polar residues. A phosphoserine mark is found at Ser-872, Ser-875, and Ser-876. The span at 876 to 886 (SEEEEEDVPLD) shows a compositional bias: acidic residues. The important for interaction with RAB8A stretch occupies residues 901–1067 (GTMNNYPTWR…ELALGTGAQG (167 aa)). One can recognise a bMERB domain in the interval 918–1067 (KEEEMKRFCK…ELALGTGAQG (150 aa)). Coiled-coil stretches lie at residues 919–962 (EEEM…QSSS) and 999–1027 (NLEE…AADR). Ser-1057 carries the post-translational modification Phosphoserine.

This sequence belongs to the Mical family. Interacts with STK38 and STK38L. Interacts with RAB1B, RAB8A, RAB10, RAB13, RAB15 and RAB35 (in their GTP-bound forms); binding to RAB1B is of low affinity compared to other Rab proteins; at least in case of RAB8A and RAB10 can bind 2 molecules of the Rab proteins simultaneously; ternary complex formation of RAB8A, RAB13 and MICAL1 is possible. Associates with the SH3 domain of NEDD9. Interacts with VIM and PLXNA3. Interacts with GRAF1/ARHGAP26, GRAF2/ARHGAP10, RAB8A, RAB8B and RAB10; may bind simultaneously to GRAFs and Rabs and connects GRAFs to Rabs. Does not interact with RAB1 and RAB11A. FAD serves as cofactor. In terms of tissue distribution, expressed in the thymus, lung, spleen, kidney, testis and hematopoietic cells.

The protein localises to the cytoplasm. It localises to the cytoskeleton. The protein resides in the endosome membrane. Its subcellular location is the midbody. It carries out the reaction L-methionyl-[F-actin] + NADPH + O2 + H(+) = L-methionyl-(R)-S-oxide-[F-actin] + NADP(+) + H2O. The catalysed reaction is NADPH + O2 + H(+) = H2O2 + NADP(+). Functionally, monooxygenase that promotes depolymerization of F-actin by mediating oxidation of specific methionine residues on actin to form methionine-sulfoxide, resulting in actin filament disassembly and preventing repolymerization. In the absence of actin, it also functions as a NADPH oxidase producing H(2)O(2). Acts as a cytoskeletal regulator that connects NEDD9 to intermediate filaments. Also acts as a negative regulator of apoptosis via its interaction with STK38 and STK38L; acts by antagonizing STK38 and STK38L activation by MST1/STK4. Involved in regulation of lamina-specific connectivity in the nervous system such as the development of lamina-restricted hippocampal connections. Through redox regulation of the actin cytoskeleton controls the intracellular distribution of secretory vesicles containing L1/neurofascin/NgCAM family proteins in neurons, thereby regulating their cell surface levels. May act as Rab effector protein and play a role in vesicle trafficking. Promotes endosomal tubule extension by associating with RAB8 (RAB8A or RAB8B), RAB10 and GRAF (GRAF1/ARHGAP26 or GRAF2/ARHGAP10) on the endosomal membrane which may connect GRAFs to Rabs, thereby participating in neosynthesized Rab8-Rab10-Rab11-dependent protein export. The polypeptide is [F-actin]-monooxygenase MICAL1 (MICAL1) (Homo sapiens (Human)).